The sequence spans 280 residues: Undecaprenyl-diphosphatase (280 aa).

The next 8 membrane-spanning stretches (helical) occupy residues 3–23 (IILL…EFLP), 45–65 (VDLF…YDYW), 88–108 (QLGL…FTFA), 115–135 (LFDP…IFYV), 150–170 (VGLK…IPGT), 191–211 (AEFS…LDLL), 225–245 (VLGI…RLLV), and 255–275 (IFAW…WGFG).

The protein belongs to the UppP family.

Its subcellular location is the cell inner membrane. It carries out the reaction di-trans,octa-cis-undecaprenyl diphosphate + H2O = di-trans,octa-cis-undecaprenyl phosphate + phosphate + H(+). Functionally, catalyzes the dephosphorylation of undecaprenyl diphosphate (UPP). Confers resistance to bacitracin. The sequence is that of Undecaprenyl-diphosphatase from Psychrobacter arcticus (strain DSM 17307 / VKM B-2377 / 273-4).